Consider the following 156-residue polypeptide: 3-hydroxyacyl-[acyl-carrier-protein] dehydratase FabZ (156 aa).

Residue H54 is part of the active site.

This sequence belongs to the thioester dehydratase family. FabZ subfamily.

It localises to the cytoplasm. The catalysed reaction is a (3R)-hydroxyacyl-[ACP] = a (2E)-enoyl-[ACP] + H2O. In terms of biological role, involved in unsaturated fatty acids biosynthesis. Catalyzes the dehydration of short chain beta-hydroxyacyl-ACPs and long chain saturated and unsaturated beta-hydroxyacyl-ACPs. This is 3-hydroxyacyl-[acyl-carrier-protein] dehydratase FabZ from Koribacter versatilis (strain Ellin345).